Consider the following 357-residue polypeptide: Dehydrogenase FUB6 (357 aa).

It belongs to the zinc-containing alcohol dehydrogenase family. Quinone oxidoreductase subfamily.

It functions in the pathway mycotoxin biosynthesis. Its function is as follows. Dehydrogenase; part of the gene cluster that mediates the biosynthesis of fusaric acid, a mycotoxin with low to moderate toxicity to animals and humans, but with high phytotoxic properties. L-aspartate is suggested as fusaric acid amino acid precursor that is activated and further processed to O-acetyl-L-homoserine by cluster enzymes aspartate kinase FUB3 and homoserine O-acetyltransferase FUB5, as well as enzymes of the primary metabolism. The polyketide synthase (PKS) FUB1 generates the triketide trans-2-hexenal which is presumptively released by the hydrolase FUB4 and linked to the NRPS-bound amino acid precursor by NAD(P)-dependent dehydrogenase FUB6. FUB1, FUB4, and the non-canonical NRPS Fub8 may form an enzyme complex. Further processing of the NRPS-bound intermediate might be carried out by FUB6 and the O-acetylhomoserine FUB7, enabling a spontaneous electrocyclization to close the carbon backbone of fusaric acid. Dihydrofusaric acid is likely to be released via reduction by the thioester reductase (TR) domain of FUB8 whereupon the final oxidation to fusaric acid may (also) be performed by the FMN-dependent dehydrogenase FUB9. The chain is Dehydrogenase FUB6 from Gibberella moniliformis (strain M3125 / FGSC 7600) (Maize ear and stalk rot fungus).